A 143-amino-acid chain; its full sequence is Large ribosomal subunit protein uL15 (143 aa).

A disordered region spans residues 1 to 52 (MELNSIQPADGAKHYKRRVGRGIGSGLGKTSGRGHKGQKSRSGGFHKVGFEG). The segment covering 21-31 (RGIGSGLGKTS) has biased composition (gly residues).

It belongs to the universal ribosomal protein uL15 family. In terms of assembly, part of the 50S ribosomal subunit.

Functionally, binds to the 23S rRNA. The protein is Large ribosomal subunit protein uL15 of Janthinobacterium sp. (strain Marseille) (Minibacterium massiliensis).